The chain runs to 263 residues: Hydroxyethylthiazole kinase (263 aa).

Met41 is a substrate binding site. ATP-binding residues include Arg117 and Ser163. Ala190 lines the substrate pocket.

It belongs to the Thz kinase family. The cofactor is Mg(2+).

The enzyme catalyses 5-(2-hydroxyethyl)-4-methylthiazole + ATP = 4-methyl-5-(2-phosphooxyethyl)-thiazole + ADP + H(+). The protein operates within cofactor biosynthesis; thiamine diphosphate biosynthesis; 4-methyl-5-(2-phosphoethyl)-thiazole from 5-(2-hydroxyethyl)-4-methylthiazole: step 1/1. Catalyzes the phosphorylation of the hydroxyl group of 4-methyl-5-beta-hydroxyethylthiazole (THZ). In Haemophilus influenzae (strain PittEE), this protein is Hydroxyethylthiazole kinase.